Here is a 264-residue protein sequence, read N- to C-terminus: MKKLKLHGFNNLTKSLSFCIYDICYAKTAEERDGYIAYIDELYNANRLTEILTETCSIIGANILNIARQDYEPQGASVTILVSEEPVDPKLIDQTEHPGPLPETVVAHLDKSHICVHTYPESHPEGGLCTFRADIEVSTCGVISPLKALNYLIHQLESDIVTIDYRVRGFTRDINGMKHFIDHEINSIQNFMSDDIKSLYDMVDVNVYQENIFHTKMLLKEFDLKHYMFHTRPEELTAEERKVITDLLWKEMREIYYGRNIPAV.

Ser112 acts as the Schiff-base intermediate with substrate; via pyruvic acid in catalysis. A Pyruvic acid (Ser); by autocatalysis modification is found at Ser112. The Proton acceptor; for processing activity role is filled by His117. Cys140 acts as the Proton donor; for catalytic activity in catalysis.

It belongs to the prokaryotic AdoMetDC family. Type 2 subfamily. Heterooctamer of four alpha and four beta chains arranged as a tetramer of alpha/beta heterodimers. It depends on pyruvate as a cofactor. Post-translationally, is synthesized initially as an inactive proenzyme. Formation of the active enzyme involves a self-maturation process in which the active site pyruvoyl group is generated from an internal serine residue via an autocatalytic post-translational modification. Two non-identical subunits are generated from the proenzyme in this reaction, and the pyruvate is formed at the N-terminus of the alpha chain, which is derived from the carboxyl end of the proenzyme. The post-translation cleavage follows an unusual pathway, termed non-hydrolytic serinolysis, in which the side chain hydroxyl group of the serine supplies its oxygen atom to form the C-terminus of the beta chain, while the remainder of the serine residue undergoes an oxidative deamination to produce ammonia and the pyruvoyl group blocking the N-terminus of the alpha chain.

The enzyme catalyses S-adenosyl-L-methionine + H(+) = S-adenosyl 3-(methylsulfanyl)propylamine + CO2. Its pathway is amine and polyamine biosynthesis; S-adenosylmethioninamine biosynthesis; S-adenosylmethioninamine from S-adenosyl-L-methionine: step 1/1. Its function is as follows. Catalyzes the decarboxylation of S-adenosylmethionine to S-adenosylmethioninamine (dcAdoMet), the propylamine donor required for the synthesis of the polyamines spermine and spermidine from the diamine putrescine. This Klebsiella pneumoniae (strain 342) protein is S-adenosylmethionine decarboxylase proenzyme.